A 142-amino-acid chain; its full sequence is Nucleoside diphosphate kinase (142 aa).

ATP is bound by residues Lys-11, Phe-59, Arg-87, Thr-93, Arg-104, and Asn-114. His-117 acts as the Pros-phosphohistidine intermediate in catalysis.

It belongs to the NDK family. In terms of assembly, homotetramer. Requires Mg(2+) as cofactor.

It is found in the cytoplasm. It carries out the reaction a 2'-deoxyribonucleoside 5'-diphosphate + ATP = a 2'-deoxyribonucleoside 5'-triphosphate + ADP. The catalysed reaction is a ribonucleoside 5'-diphosphate + ATP = a ribonucleoside 5'-triphosphate + ADP. In terms of biological role, major role in the synthesis of nucleoside triphosphates other than ATP. The ATP gamma phosphate is transferred to the NDP beta phosphate via a ping-pong mechanism, using a phosphorylated active-site intermediate. The polypeptide is Nucleoside diphosphate kinase (Dechloromonas aromatica (strain RCB)).